Reading from the N-terminus, the 546-residue chain is MPGFQNANISDLAPPAREKTFDDTIAVKIPEDEKNTWFSWRKLWAFTGPGFLMSIAYLDPGNIESDLQAGAQAEYKLLWVLLVSHIVGMLLQRMSARLGVVSGKHMAEIAYDYYPLVPRIILWLMIEIAIVCSDMQEVIGTAIAIYLLSSGKIPLLVGVLITILDTFTFLFIDRYGIRKLEFIFVALISTMAISFGYEFVVMKPVLTKVLTGTVVPWCSGCGKEEIITAISIFGAVIMPHNFYLHSALVKSRKVDRSSKTRIAEANKYFSIESAFALSVSFFINLFVLSVFARGLYQKTNGDVNSMCLSHNDIPDSNVFPNNTSSVTVDLFQGGIYLGCQFGLFAMIIWAIGIFAAGQSSTMTGTYTGQFVMEGFVRISWPKWKRVLITRAVAITPTLILCIKAHGIKNLTGMNDFLNCVQMVQLPFALIPMITFTSSKRIMHNFRTSKPLQYFSIICGIITIGINVYFIFQYVTENFGTGWLIFVIIGPFTLLYIAFILYLAIYCLVACELMNDTVNLPGFDFHRTLELDAPWITETFVVNDVYF.

The Cytoplasmic segment spans residues M1–K42. Residues L43 to I63 traverse the membrane as a helical segment. The Extracellular portion of the chain corresponds to E64–G70. A helical transmembrane segment spans residues A71 to L91. At Q92–R119 the chain is on the cytoplasmic side. A helical membrane pass occupies residues I120 to G140. Over T141–K152 the chain is Extracellular. The helical transmembrane segment at I153–D173 threads the bilayer. Over R174–E181 the chain is Cytoplasmic. Residues F182 to M202 traverse the membrane as a helical segment. The Extracellular portion of the chain corresponds to K203–T228. The helical transmembrane segment at A229–V249 threads the bilayer. Topologically, residues K250–S270 are cytoplasmic. A helical transmembrane segment spans residues I271–F291. Residues A292 to G334 lie on the Extracellular side of the membrane. N-linked (GlcNAc...) asparagine glycosylation occurs at N321. The chain crosses the membrane as a helical span at residues I335–A355. Topologically, residues A356–V386 are cytoplasmic. A helical transmembrane segment spans residues L387 to I407. Residues K408–D415 are Extracellular-facing. The N-linked (GlcNAc...) asparagine glycan is linked to N409. A helical transmembrane segment spans residues F416–T436. Topologically, residues S437–Y453 are cytoplasmic. Residues F454–V474 form a helical membrane-spanning segment. Over T475–L483 the chain is Extracellular. A helical transmembrane segment spans residues I484–I504. At Y505–F546 the chain is on the cytoplasmic side.

This sequence belongs to the NRAMP family. As to expression, expressed in dopaminergic neurons (at protein level). Primarily expressed in mc1, mc2 and mc3 epithelial cells of the pharynx and vpil-6 pharyngeal-intestinal valve cells displaying an anterior-posterior expression gradient. Expressed in gonad sheath cells.

The protein resides in the apical cell membrane. The protein localises to the cytoplasmic vesicle membrane. In terms of biological role, probable divalent metal ion transporter which regulates Mn(2+) uptake. This chain is NRAMP-like transporter smf-2, found in Caenorhabditis elegans.